Consider the following 592-residue polypeptide: Transmembrane 9 superfamily member 2 (592 aa).

Positions 1 to 24 are cleaved as a signal peptide; the sequence is MRTPTTILLLVGAILFSGAGYVRS. At 25-229 the chain is on the lumenal side; the sequence is DASDHRYKEG…SLPHHLEIHW (205 aa). A helical membrane pass occupies residues 230-250; that stretch reads FSIINSCVTVLLLTGFLATIL. Topologically, residues 251 to 302 are cytoplasmic; it reads MRVLKNDFMKYAQDEEAADDQEETGWKYIHGDVFRFPTHNSLFAASLGSGTQ. A helical transmembrane segment spans residues 303-323; sequence LFTLTIFIFMLALVGVFYPYN. A topological domain (lumenal) is located at residue R324. A helical transmembrane segment spans residues 325 to 345; the sequence is GALFTALVVIYALTSGIAGYT. Topologically, residues 346–362 are cytoplasmic; sequence SASFYCQLEGKSWVRNL. Residues 363-383 form a helical membrane-spanning segment; it reads LLTGCLFCGPLFLTFCFLNTV. The Lumenal portion of the chain corresponds to 384-397; it reads AITYTATAALPFGT. The helical transmembrane segment at 398-418 threads the bilayer; the sequence is IVVIVLIWTLVTSPLLVLGGI. The Cytoplasmic portion of the chain corresponds to 419 to 452; it reads AGKNSKAEFQAPCRTTKYPREIPPLPWYRSAIPQ. The chain crosses the membrane as a helical span at residues 453-473; that stretch reads MAMAGFLPFSAIYIELYYIFA. Residues 474 to 485 lie on the Lumenal side of the membrane; it reads SVWGHRIYTIYS. A helical transmembrane segment spans residues 486–506; sequence ILFIVFIILIIVTAFITVALT. Over 507-521 the chain is Cytoplasmic; that stretch reads YFQLAAEDHQWWWRS. Residues 522–542 traverse the membrane as a helical segment; sequence FLCGGSTGLFIYAYCLYYYYA. Over 543–553 the chain is Lumenal; it reads RSDMSGFMQTS. The helical transmembrane segment at 554-574 threads the bilayer; the sequence is FFFGYMACICYGFFLMLGTVG. At 575–592 the chain is on the cytoplasmic side; sequence FRAALLFVRHIYRSIKCE. The Endoplasmic reticulum export signal motif lies at 581 to 586; the sequence is FVRHIY. The Golgi retention signal signature appears at 590–592; sequence KCE.

The protein belongs to the nonaspanin (TM9SF) (TC 9.A.2) family.

It localises to the endosome membrane. It is found in the golgi apparatus membrane. The sequence is that of Transmembrane 9 superfamily member 2 from Arabidopsis thaliana (Mouse-ear cress).